The following is a 162-amino-acid chain: Nucleotide-binding protein CMM_2802 (162 aa).

The protein belongs to the YajQ family.

Its function is as follows. Nucleotide-binding protein. This Clavibacter michiganensis subsp. michiganensis (strain NCPPB 382) protein is Nucleotide-binding protein CMM_2802.